A 64-amino-acid polypeptide reads, in one-letter code: uncharacterized protein (64 aa).

Residues 33 to 55 form a helical membrane-spanning segment; that stretch reads YTPLGSYMIFGIVHYFCSYHIGI.

The protein localises to the membrane. This is an uncharacterized protein from Saccharomyces cerevisiae (strain ATCC 204508 / S288c) (Baker's yeast).